The primary structure comprises 243 residues: METNFIDLRNLTELTVREFMSNHNVAGHDVDHFIAVRNHAIKALKYENISNSKKLQVEFAAMLHDVDDPKIFSQSIDYQNAKYILDTIFTKMSFENIISDCTYDVFKQGIVTLISLVSCSKNGDDGVEESWMAIPRDADRLEAIGKIGIQRCTDYANHIKLPYYLDSTPRAKTSEEALSFANRDRFDRYKNGHKSVSMIDHYYDKLLHIGRPEYLCSNNPYILEKSNKRNQEMIDYVINFKFE.

This is an uncharacterized protein from Acanthamoeba polyphaga (Amoeba).